Here is an 838-residue protein sequence, read N- to C-terminus: Probable beta-glucosidase I (838 aa).

N57 and N197 each carry an N-linked (GlcNAc...) asparagine glycan. The active site involves D225. A PA14 domain is found at 395 to 555; that stretch reads EGEKGFKFRV…GQEELISKAA (161 aa). An N-linked (GlcNAc...) asparagine glycan is attached at N493.

This sequence belongs to the glycosyl hydrolase 3 family.

It localises to the secreted. It catalyses the reaction Hydrolysis of terminal, non-reducing beta-D-glucosyl residues with release of beta-D-glucose.. The protein operates within glycan metabolism; cellulose degradation. In terms of biological role, beta-glucosidases are one of a number of cellulolytic enzymes involved in the degradation of cellulosic biomass. Catalyzes the last step releasing glucose from the inhibitory cellobiose. The protein is Probable beta-glucosidase I (bglI) of Aspergillus clavatus (strain ATCC 1007 / CBS 513.65 / DSM 816 / NCTC 3887 / NRRL 1 / QM 1276 / 107).